The chain runs to 326 residues: Phospho-N-acetylmuramoyl-pentapeptide-transferase (326 aa).

A run of 10 helical transmembrane segments spans residues 2–22 (ILAT…FPYF), 51–71 (VPPM…LLWV), 73–93 (LTPE…LGFI), 113–133 (ILIQ…YSAE), 143–163 (GVII…IVGS), 175–195 (GLAA…AYIT), 199–219 (MNIT…LWFN), 225–245 (IFMG…TSVL), 250–270 (MLFA…IIQI), and 305–325 (VIVM…ITFL).

The protein belongs to the glycosyltransferase 4 family. MraY subfamily. It depends on Mg(2+) as a cofactor.

Its subcellular location is the cell membrane. It carries out the reaction UDP-N-acetyl-alpha-D-muramoyl-L-alanyl-gamma-D-glutamyl-meso-2,6-diaminopimeloyl-D-alanyl-D-alanine + di-trans,octa-cis-undecaprenyl phosphate = di-trans,octa-cis-undecaprenyl diphospho-N-acetyl-alpha-D-muramoyl-L-alanyl-D-glutamyl-meso-2,6-diaminopimeloyl-D-alanyl-D-alanine + UMP. It functions in the pathway cell wall biogenesis; peptidoglycan biosynthesis. In terms of biological role, catalyzes the initial step of the lipid cycle reactions in the biosynthesis of the cell wall peptidoglycan: transfers peptidoglycan precursor phospho-MurNAc-pentapeptide from UDP-MurNAc-pentapeptide onto the lipid carrier undecaprenyl phosphate, yielding undecaprenyl-pyrophosphoryl-MurNAc-pentapeptide, known as lipid I. The sequence is that of Phospho-N-acetylmuramoyl-pentapeptide-transferase from Wolbachia sp. subsp. Drosophila simulans (strain wRi).